Here is a 237-residue protein sequence, read N- to C-terminus: Ribonuclease PH (237 aa).

Residues R86 and 124 to 126 (GTR) contribute to the phosphate site.

It belongs to the RNase PH family. In terms of assembly, homohexameric ring arranged as a trimer of dimers.

The enzyme catalyses tRNA(n+1) + phosphate = tRNA(n) + a ribonucleoside 5'-diphosphate. Functionally, phosphorolytic 3'-5' exoribonuclease that plays an important role in tRNA 3'-end maturation. Removes nucleotide residues following the 3'-CCA terminus of tRNAs; can also add nucleotides to the ends of RNA molecules by using nucleoside diphosphates as substrates, but this may not be physiologically important. Probably plays a role in initiation of 16S rRNA degradation (leading to ribosome degradation) during starvation. This is Ribonuclease PH from Roseobacter denitrificans (strain ATCC 33942 / OCh 114) (Erythrobacter sp. (strain OCh 114)).